Consider the following 65-residue polypeptide: Precursor peptide TigB (65 aa).

6 TIGSVS motif repeats span residues Thr16–Ser21, Thr23–Ser28, Thr33–Ser38, Thr40–Ser45, Thr47–Ser52, and Thr54–Ser59. 6 positions are modified to methylcyclopropylglycine: Ile17, Ile24, Ile34, Ile41, Ile48, and Ile55.

Is subject to maturation by TigE, that catalyzes the formation of methylcyclopropylglycine (mCPG) residues from isoleucine residues residing in the repeating TIGSVS motifs.

Its function is as follows. Precursor peptide which undergoes post-translational modifications by tailoring enzymes, leading to the mature natural product. This is Precursor peptide TigB from Paramaledivibacter caminithermalis (strain DSM 15212 / CIP 107654 / DViRD3) (Clostridium caminithermale).